Reading from the N-terminus, the 415-residue chain is Serine hydroxymethyltransferase (415 aa).

(6S)-5,6,7,8-tetrahydrofolate-binding positions include leucine 118 and 122–124 (GHL). The residue at position 227 (lysine 227) is an N6-(pyridoxal phosphate)lysine.

It belongs to the SHMT family. As to quaternary structure, homodimer. It depends on pyridoxal 5'-phosphate as a cofactor.

The protein localises to the cytoplasm. It carries out the reaction (6R)-5,10-methylene-5,6,7,8-tetrahydrofolate + glycine + H2O = (6S)-5,6,7,8-tetrahydrofolate + L-serine. It participates in one-carbon metabolism; tetrahydrofolate interconversion. Its pathway is amino-acid biosynthesis; glycine biosynthesis; glycine from L-serine: step 1/1. Its function is as follows. Catalyzes the reversible interconversion of serine and glycine with tetrahydrofolate (THF) serving as the one-carbon carrier. This reaction serves as the major source of one-carbon groups required for the biosynthesis of purines, thymidylate, methionine, and other important biomolecules. Also exhibits THF-independent aldolase activity toward beta-hydroxyamino acids, producing glycine and aldehydes, via a retro-aldol mechanism. The sequence is that of Serine hydroxymethyltransferase from Elusimicrobium minutum (strain Pei191).